The chain runs to 529 residues: Peptide chain release factor 3 (529 aa).

One can recognise a tr-type G domain in the interval 10–278 (ARRRTFAIIS…NFVDLAPAPR (269 aa)). Residues 19–26 (SHPDAGKT), 87–91 (DTPGH), and 141–144 (NKLD) contribute to the GTP site.

This sequence belongs to the TRAFAC class translation factor GTPase superfamily. Classic translation factor GTPase family. PrfC subfamily.

It localises to the cytoplasm. Increases the formation of ribosomal termination complexes and stimulates activities of RF-1 and RF-2. It binds guanine nucleotides and has strong preference for UGA stop codons. It may interact directly with the ribosome. The stimulation of RF-1 and RF-2 is significantly reduced by GTP and GDP, but not by GMP. The protein is Peptide chain release factor 3 of Nitratidesulfovibrio vulgaris (strain ATCC 29579 / DSM 644 / CCUG 34227 / NCIMB 8303 / VKM B-1760 / Hildenborough) (Desulfovibrio vulgaris).